The sequence spans 426 residues: 3-phosphoshikimate 1-carboxyvinyltransferase (426 aa).

The 3-phosphoshikimate site is built by Lys-22, Ser-23, and Arg-27. Lys-22 serves as a coordination point for phosphoenolpyruvate. Phosphoenolpyruvate-binding residues include Gly-96 and Arg-124. Ser-170, Ser-171, Gln-172, Ser-198, Asp-314, Asn-337, and Lys-341 together coordinate 3-phosphoshikimate. A phosphoenolpyruvate-binding site is contributed by Gln-172. The active-site Proton acceptor is Asp-314. 3 residues coordinate phosphoenolpyruvate: Arg-345, Arg-387, and Lys-412.

Belongs to the EPSP synthase family. As to quaternary structure, monomer.

It localises to the cytoplasm. It carries out the reaction 3-phosphoshikimate + phosphoenolpyruvate = 5-O-(1-carboxyvinyl)-3-phosphoshikimate + phosphate. The protein operates within metabolic intermediate biosynthesis; chorismate biosynthesis; chorismate from D-erythrose 4-phosphate and phosphoenolpyruvate: step 6/7. Catalyzes the transfer of the enolpyruvyl moiety of phosphoenolpyruvate (PEP) to the 5-hydroxyl of shikimate-3-phosphate (S3P) to produce enolpyruvyl shikimate-3-phosphate and inorganic phosphate. In Photobacterium damsela subsp. piscicida (Pasteurella piscicida), this protein is 3-phosphoshikimate 1-carboxyvinyltransferase.